Reading from the N-terminus, the 923-residue chain is Immunomodulating metalloprotease (923 aa).

The N-terminal stretch at 1 to 41 (MSLSTTAFPSLQGENMSRSPIPRHRALLAGFCLAGALSAQA) is a signal peptide. Positions 450–794 (QGFTAIGRMA…FYTQWVHYWA (345 aa)) constitute a Peptidase M60 domain. Residue His-696 coordinates Zn(2+). Glu-697 is an active-site residue. His-700 provides a ligand contact to Zn(2+).

This sequence belongs to the peptidase M88 family. It depends on Zn(2+) as a cofactor.

It is found in the secreted. With respect to regulation, proteolytic activity is blocked in the presence of EDTA. Protease that degrades several proteins of the host immune system. Cleaves P-selectin glycoprotein ligand-1 (PSGL-1), leading to its functional inhibition; PSGL-1 is a leukocyte cell-surface receptor essential for leukocyte recruitment to the site of infection. Next to PSGL-1, targets host CD43 and CD44 that are also involved in leukocyte homing. Thus, prevents neutrophil extravasation and thereby protects P.aeruginosa from neutrophil attack. Is also able to inhibit the decay accelerating factor (CD55), but not the cell-surface receptors CD46 and CD31. This chain is Immunomodulating metalloprotease, found in Pseudomonas aeruginosa (strain ATCC 15692 / DSM 22644 / CIP 104116 / JCM 14847 / LMG 12228 / 1C / PRS 101 / PAO1).